Reading from the N-terminus, the 388-residue chain is Nuclear hormone receptor family member nhr-16 (388 aa).

Positions 11-86 form a DNA-binding region, nuclear receptor; that stretch reads FLKCAICQES…VGMNPAGVQQ (76 aa). 2 consecutive NR C4-type zinc fingers follow at residues 14–34 and 50–74; these read CAIC…CRAC and CQGN…YIKC. The 273-residue stretch at 115 to 387 folds into the NR LBD domain; that stretch reads PPSSLMLHIP…DEFYNLMSGR (273 aa).

The protein belongs to the nuclear hormone receptor family.

Its subcellular location is the nucleus. In terms of biological role, orphan nuclear receptor. The chain is Nuclear hormone receptor family member nhr-16 (nhr-16) from Caenorhabditis elegans.